Consider the following 98-residue polypeptide: NADH-ubiquinone oxidoreductase chain 4L (98 aa).

Helical transmembrane passes span methionine 1–valine 21, leucine 26–leucine 46, and isoleucine 61–isoleucine 81.

Belongs to the complex I subunit 4L family. In terms of assembly, core subunit of respiratory chain NADH dehydrogenase (Complex I) which is composed of 45 different subunits.

It localises to the mitochondrion inner membrane. The enzyme catalyses a ubiquinone + NADH + 5 H(+)(in) = a ubiquinol + NAD(+) + 4 H(+)(out). In terms of biological role, core subunit of the mitochondrial membrane respiratory chain NADH dehydrogenase (Complex I) which catalyzes electron transfer from NADH through the respiratory chain, using ubiquinone as an electron acceptor. Part of the enzyme membrane arm which is embedded in the lipid bilayer and involved in proton translocation. The polypeptide is NADH-ubiquinone oxidoreductase chain 4L (MT-ND4L) (Chlorocebus aethiops (Green monkey)).